A 158-amino-acid chain; its full sequence is Ribonuclease H (158 aa).

In terms of domain architecture, RNase H type-1 spans 1 to 147 (MKVTIYTDGA…CDVLATTAAD (147 aa)). Residues Asp8, Glu52, Asp74, and Asp139 each coordinate Mg(2+).

Belongs to the RNase H family. In terms of assembly, monomer. Mg(2+) serves as cofactor.

It is found in the cytoplasm. It carries out the reaction Endonucleolytic cleavage to 5'-phosphomonoester.. Endonuclease that specifically degrades the RNA of RNA-DNA hybrids. This chain is Ribonuclease H, found in Lachnoclostridium phytofermentans (strain ATCC 700394 / DSM 18823 / ISDg) (Clostridium phytofermentans).